A 125-amino-acid polypeptide reads, in one-letter code: Translation initiation factor 5A (125 aa).

Position 35 is a hypusine (Lys35).

Belongs to the eIF-5A family.

Its subcellular location is the cytoplasm. Functionally, functions by promoting the formation of the first peptide bond. The chain is Translation initiation factor 5A (eIF5A) from Methanosphaerula palustris (strain ATCC BAA-1556 / DSM 19958 / E1-9c).